A 461-amino-acid polypeptide reads, in one-letter code: MSHIRSRFSKPADELVVRYTTSLPFDWRLYKEDIKCSTAHARMLSKQGIISAEDSQSIINGLNTILTEIETGSFVFKPETEDIHMAIEGRLFELIGEAAGRLHTARSRNDQVATDVHLFVKNACDETINKIRTLQGALLEQAEAHPQTALPGYTHMQIAQPVLLPHHLLAYFEMLERDCGRFTDARKRADVMPLGSGALAGVPYPLDREMVAKELGFSAISQNSLDAVSERDFILEYLSDAAICQMHLSRLSEEMVIWSSAEYAFVELDDAYTTGSSIMPQKKNPDVAELCRGKTGRVYGSLNTMLTVMKGLPLSYNRDLQEDKEPLFDCVDTLGDSLEVFAGMIKTAKFKPERMLRALEKGYVLATDIADYLVGKGESFRNSHGIVARLVSYAVAQNKTFGELSLAEYRQFSNLFEKDIYAVDIKSALNARNLPGGTAPKQIAQAIARAKKILAEAGVKN.

The protein belongs to the lyase 1 family. Argininosuccinate lyase subfamily.

It localises to the cytoplasm. It catalyses the reaction 2-(N(omega)-L-arginino)succinate = fumarate + L-arginine. It functions in the pathway amino-acid biosynthesis; L-arginine biosynthesis; L-arginine from L-ornithine and carbamoyl phosphate: step 3/3. In Dehalococcoides mccartyi (strain CBDB1), this protein is Argininosuccinate lyase.